Consider the following 323-residue polypeptide: Mycothiol acetyltransferase (323 aa).

Glutamate 44 is a 1D-myo-inositol 2-(L-cysteinylamino)-2-deoxy-alpha-D-glucopyranoside binding site. N-acetyltransferase domains follow at residues glycine 77 to arginine 176 and valine 173 to glycine 323. Acetyl-CoA is bound at residue isoleucine 98–valine 100. Residues glutamate 200, lysine 240, and glutamate 253 each contribute to the 1D-myo-inositol 2-(L-cysteinylamino)-2-deoxy-alpha-D-glucopyranoside site. Residues valine 257–valine 259 and glutamine 264–lysine 270 contribute to the acetyl-CoA site. Residue tyrosine 291 participates in 1D-myo-inositol 2-(L-cysteinylamino)-2-deoxy-alpha-D-glucopyranoside binding.

It belongs to the acetyltransferase family. MshD subfamily. Monomer.

The enzyme catalyses 1D-myo-inositol 2-(L-cysteinylamino)-2-deoxy-alpha-D-glucopyranoside + acetyl-CoA = mycothiol + CoA + H(+). Its function is as follows. Catalyzes the transfer of acetyl from acetyl-CoA to desacetylmycothiol (Cys-GlcN-Ins) to form mycothiol. This is Mycothiol acetyltransferase from Pseudarthrobacter chlorophenolicus (strain ATCC 700700 / DSM 12829 / CIP 107037 / JCM 12360 / KCTC 9906 / NCIMB 13794 / A6) (Arthrobacter chlorophenolicus).